The following is a 307-amino-acid chain: Protein FAM76A (307 aa).

2 disordered regions span residues 142–195 (QRKH…ESIT) and 287–307 (KQAA…ITSP). The span at 161-182 (SRLSGGSHYNSQKTLSTSSIQN) shows a compositional bias: polar residues. The stretch at 217 to 299 (IIAQLKEEVA…AALSKSKKSE (83 aa)) forms a coiled coil.

The protein belongs to the FAM76 family.

The sequence is that of Protein FAM76A (FAM76A) from Bos taurus (Bovine).